The following is a 199-amino-acid chain: NAD(P)H dehydrogenase (quinone) (199 aa).

One can recognise a Flavodoxin-like domain in the interval 4–190 (MLVLYYSAYG…DGARFQGRRV (187 aa)). Residues 10 to 15 (SAYGHM) and 78 to 80 (TRY) each bind FMN. Tyr-12 contributes to the NAD(+) binding site. Trp-98 serves as a coordination point for substrate. FMN-binding positions include 113–119 (STATQYG) and His-134. The disordered stretch occupies residues 161–181 (YGMTTTADGDGSRQPSAQELD). Residues 163–177 (MTTTADGDGSRQPSA) show a composition bias toward polar residues.

This sequence belongs to the WrbA family. FMN serves as cofactor.

It catalyses the reaction a quinone + NADH + H(+) = a quinol + NAD(+). It carries out the reaction a quinone + NADPH + H(+) = a quinol + NADP(+). The sequence is that of NAD(P)H dehydrogenase (quinone) from Brucella canis (strain ATCC 23365 / NCTC 10854 / RM-666).